A 155-amino-acid polypeptide reads, in one-letter code: Large ribosomal subunit protein uL30 (155 aa).

The protein belongs to the universal ribosomal protein uL30 family. As to quaternary structure, part of the 50S ribosomal subunit.

The chain is Large ribosomal subunit protein uL30 from Pyrococcus horikoshii (strain ATCC 700860 / DSM 12428 / JCM 9974 / NBRC 100139 / OT-3).